The following is a 388-amino-acid chain: S-adenosylmethionine synthase (388 aa).

Histidine 16 lines the ATP pocket. Aspartate 18 is a binding site for Mg(2+). Glutamate 44 contributes to the K(+) binding site. L-methionine contacts are provided by glutamate 57 and glutamine 100. The segment at 100–110 (QSPEIAQGVDR) is flexible loop. Residues 165 to 167 (DAK), aspartate 240, 246 to 247 (RK), alanine 263, and lysine 267 each bind ATP. Aspartate 240 lines the L-methionine pocket. Residue lysine 271 participates in L-methionine binding.

Belongs to the AdoMet synthase family. Homotetramer; dimer of dimers. Mg(2+) is required as a cofactor. The cofactor is K(+).

Its subcellular location is the cytoplasm. The catalysed reaction is L-methionine + ATP + H2O = S-adenosyl-L-methionine + phosphate + diphosphate. Its pathway is amino-acid biosynthesis; S-adenosyl-L-methionine biosynthesis; S-adenosyl-L-methionine from L-methionine: step 1/1. Its function is as follows. Catalyzes the formation of S-adenosylmethionine (AdoMet) from methionine and ATP. The overall synthetic reaction is composed of two sequential steps, AdoMet formation and the subsequent tripolyphosphate hydrolysis which occurs prior to release of AdoMet from the enzyme. The polypeptide is S-adenosylmethionine synthase (Acinetobacter baumannii (strain AYE)).